The following is a 210-amino-acid chain: Na(+)-translocating NADH-quinone reductase subunit D (210 aa).

A run of 6 helical transmembrane segments spans residues 14–34 (PIIN…ALAV), 42–62 (LVMS…ISLI), 72–92 (IIVQ…VLQA), 96–116 (EIAK…IVMG), 131–151 (FMDG…VGFF), and 178–198 (NGLL…IWVI).

This sequence belongs to the NqrDE/RnfAE family. In terms of assembly, composed of six subunits; NqrA, NqrB, NqrC, NqrD, NqrE and NqrF.

It localises to the cell inner membrane. The enzyme catalyses a ubiquinone + n Na(+)(in) + NADH + H(+) = a ubiquinol + n Na(+)(out) + NAD(+). Functionally, NQR complex catalyzes the reduction of ubiquinone-1 to ubiquinol by two successive reactions, coupled with the transport of Na(+) ions from the cytoplasm to the periplasm. NqrA to NqrE are probably involved in the second step, the conversion of ubisemiquinone to ubiquinol. The chain is Na(+)-translocating NADH-quinone reductase subunit D from Shewanella denitrificans (strain OS217 / ATCC BAA-1090 / DSM 15013).